The sequence spans 336 residues: tRNA pseudouridine synthase D (336 aa).

D84 (nucleophile) is an active-site residue. The TRUD domain maps to 164–298 (GVPNYFGEQR…TPSYRWLVGD (135 aa)).

Belongs to the pseudouridine synthase TruD family.

It catalyses the reaction uridine(13) in tRNA = pseudouridine(13) in tRNA. Responsible for synthesis of pseudouridine from uracil-13 in transfer RNAs. The chain is tRNA pseudouridine synthase D from Cellvibrio japonicus (strain Ueda107) (Pseudomonas fluorescens subsp. cellulosa).